Consider the following 296-residue polypeptide: Fructose-bisphosphate aldolase class 1 (296 aa).

The active-site Proton acceptor is glutamate 175. Lysine 212 acts as the Schiff-base intermediate with dihydroxyacetone-P in catalysis.

It belongs to the class I fructose-bisphosphate aldolase family.

The catalysed reaction is beta-D-fructose 1,6-bisphosphate = D-glyceraldehyde 3-phosphate + dihydroxyacetone phosphate. Its pathway is carbohydrate degradation; glycolysis; D-glyceraldehyde 3-phosphate and glycerone phosphate from D-glucose: step 4/4. In Staphylococcus carnosus (strain TM300), this protein is Fructose-bisphosphate aldolase class 1 (fda).